The primary structure comprises 288 residues: Bifunctional protein FolD (288 aa).

NADP(+) contacts are provided by residues 166–168 (GRS), serine 191, and isoleucine 232.

This sequence belongs to the tetrahydrofolate dehydrogenase/cyclohydrolase family. As to quaternary structure, homodimer.

The catalysed reaction is (6R)-5,10-methylene-5,6,7,8-tetrahydrofolate + NADP(+) = (6R)-5,10-methenyltetrahydrofolate + NADPH. It carries out the reaction (6R)-5,10-methenyltetrahydrofolate + H2O = (6R)-10-formyltetrahydrofolate + H(+). The protein operates within one-carbon metabolism; tetrahydrofolate interconversion. In terms of biological role, catalyzes the oxidation of 5,10-methylenetetrahydrofolate to 5,10-methenyltetrahydrofolate and then the hydrolysis of 5,10-methenyltetrahydrofolate to 10-formyltetrahydrofolate. This chain is Bifunctional protein FolD, found in Rickettsia africae (strain ESF-5).